The following is a 279-amino-acid chain: Large ribosomal subunit protein uL2 (279 aa).

The disordered stretch occupies residues 223 to 279; the sequence is MAMNPVDHPMGGGEGKSKSGGGRKHPKSPWGQLAKGLKTRNKKKASTKLIVRGRKAK. Over residues 232–242 the composition is skewed to gly residues; that stretch reads MGGGEGKSKSG. Residues 259–279 are compositionally biased toward basic residues; the sequence is LKTRNKKKASTKLIVRGRKAK.

This sequence belongs to the universal ribosomal protein uL2 family. In terms of assembly, part of the 50S ribosomal subunit. Forms a bridge to the 30S subunit in the 70S ribosome.

Functionally, one of the primary rRNA binding proteins. Required for association of the 30S and 50S subunits to form the 70S ribosome, for tRNA binding and peptide bond formation. It has been suggested to have peptidyltransferase activity; this is somewhat controversial. Makes several contacts with the 16S rRNA in the 70S ribosome. This chain is Large ribosomal subunit protein uL2, found in Chlorobaculum tepidum (strain ATCC 49652 / DSM 12025 / NBRC 103806 / TLS) (Chlorobium tepidum).